Reading from the N-terminus, the 190-residue chain is Glutamyl-tRNA(Gln) amidotransferase subunit F, mitochondrial (190 aa).

It belongs to the GatF family. As to quaternary structure, subunit of the heterotrimeric GatFAB amidotransferase (AdT) complex, composed of A, B and F subunits.

Its subcellular location is the mitochondrion inner membrane. The enzyme catalyses L-glutamyl-tRNA(Gln) + L-glutamine + ATP + H2O = L-glutaminyl-tRNA(Gln) + L-glutamate + ADP + phosphate + H(+). Allows the formation of correctly charged Gln-tRNA(Gln) through the transamidation of misacylated Glu-tRNA(Gln) in the mitochondria. The reaction takes place in the presence of glutamine and ATP through an activated gamma-phospho-Glu-tRNA(Gln). Required for proper protein synthesis within the mitochondrion. This chain is Glutamyl-tRNA(Gln) amidotransferase subunit F, mitochondrial, found in Eremothecium gossypii (strain ATCC 10895 / CBS 109.51 / FGSC 9923 / NRRL Y-1056) (Yeast).